The chain runs to 239 residues: tRNA (guanine-N(1)-)-methyltransferase (239 aa).

Residues glycine 108 and 127–132 each bind S-adenosyl-L-methionine; that span reads LGDYVL.

The protein belongs to the RNA methyltransferase TrmD family. As to quaternary structure, homodimer.

It is found in the cytoplasm. The enzyme catalyses guanosine(37) in tRNA + S-adenosyl-L-methionine = N(1)-methylguanosine(37) in tRNA + S-adenosyl-L-homocysteine + H(+). Functionally, specifically methylates guanosine-37 in various tRNAs. In Streptococcus pneumoniae (strain P1031), this protein is tRNA (guanine-N(1)-)-methyltransferase.